We begin with the raw amino-acid sequence, 100 residues long: U-myrmeciitoxin(01)-Mg7c (100 aa).

An N-terminal signal peptide occupies residues Met1–Ala17. Residues Ile18–Pro50 constitute a propeptide that is removed on maturation. The O-linked (GalNAc...) serine glycan is linked to Ser85. O-linked (GalNAc...) threonine glycans are attached at residues Thr94 and Thr95.

This sequence belongs to the formicidae venom precursor-01 superfamily. Post-translationally, glycosylation is critical to maintaining the aqueous solubility of this protein, but does not directly contribute to its activity. Expressed by the venom gland.

It is found in the secreted. Its subcellular location is the target cell membrane. Its function is as follows. Neurotoxin that triggers pain behavior and inflammation in mammals, and is paralytic and lethal to insects. Causes a time-dependent increase in cell leak current. May act by targeting membranes. This is U-myrmeciitoxin(01)-Mg7c from Myrmecia gulosa (Red bulldog ant).